Here is a 206-residue protein sequence, read N- to C-terminus: Ras-related protein Ral-A (206 aa).

A GTP-binding site is contributed by 21-28 (GSGGVGKS). The short motif at 43 to 51 (YEPTKADSY) is the Effector region element. Residues 68–72 (DTAGQ) and 127–130 (NKSD) each bind GTP. Serine 194 carries the post-translational modification Phosphoserine. Cysteine 203 carries the cysteine methyl ester modification. Residue cysteine 203 is the site of S-geranylgeranyl cysteine attachment. Positions 204 to 206 (CIL) are cleaved as a propeptide — removed in mature form.

The protein belongs to the small GTPase superfamily. Ras family. As to quaternary structure, interacts (via effector domain) with RALBP1; during mitosis, recruits RALBP1 to the mitochondrion where it promotes DNM1L phosphorylation and mitochondrial fission. Interacts with EXOC2/Sec5 and EXOC8/Exo84; binding to EXOC2 and EXOC8 is mutually exclusive. Interacts with Clostridium exoenzyme C3. Interacts with RALGPS1. Interacts with LPAR1 and LPAR2. Interacts with GRK2 in response to LPAR1 activation. RALA and GRK2 binding to LPAR1 is mutually exclusive. Interacts with CDC42. In terms of processing, prenylation is essential for membrane localization. Post-translationally, phosphorylated. Phosphorylation at Ser-194 by AURKA/Aurora kinase A, during mitosis, induces RALA localization to the mitochondrion where it regulates mitochondrial fission.

Its subcellular location is the cell membrane. It is found in the cleavage furrow. It localises to the midbody. The protein resides in the midbody ring. The protein localises to the mitochondrion. The enzyme catalyses GTP + H2O = GDP + phosphate + H(+). With respect to regulation, alternates between an inactive form bound to GDP and an active form bound to GTP. Activated by a guanine nucleotide-exchange factor (GEF) and inactivated by a GTPase-activating protein (GAP). Multifunctional GTPase involved in a variety of cellular processes including gene expression, cell migration, cell proliferation, oncogenic transformation and membrane trafficking. Accomplishes its multiple functions by interacting with distinct downstream effectors. Acts as a GTP sensor for GTP-dependent exocytosis of dense core vesicles. Key regulator of LPAR1 signaling and competes with GRK2 for binding to LPAR1 thus affecting the signaling properties of the receptor. Required for anchorage-independent proliferation of transformed cells. The RALA-exocyst complex regulates integrin-dependent membrane raft exocytosis and growth signaling. During mitosis, supports the stabilization and elongation of the intracellular bridge between dividing cells. Cooperates with EXOC2 to recruit other components of the exocyst to the early midbody. During mitosis, also controls mitochondrial fission by recruiting to the mitochondrion RALBP1, which mediates the phosphorylation and activation of DNM1L by the mitotic kinase cyclin B-CDK1. The chain is Ras-related protein Ral-A (Rala) from Mus musculus (Mouse).